A 253-amino-acid polypeptide reads, in one-letter code: 3-deoxy-manno-octulosonate cytidylyltransferase (253 aa).

The protein belongs to the KdsB family.

The protein localises to the cytoplasm. The catalysed reaction is 3-deoxy-alpha-D-manno-oct-2-ulosonate + CTP = CMP-3-deoxy-beta-D-manno-octulosonate + diphosphate. The protein operates within nucleotide-sugar biosynthesis; CMP-3-deoxy-D-manno-octulosonate biosynthesis; CMP-3-deoxy-D-manno-octulosonate from 3-deoxy-D-manno-octulosonate and CTP: step 1/1. Its pathway is bacterial outer membrane biogenesis; lipopolysaccharide biosynthesis. Activates KDO (a required 8-carbon sugar) for incorporation into bacterial lipopolysaccharide in Gram-negative bacteria. In Acinetobacter baumannii (strain ATCC 17978 / DSM 105126 / CIP 53.77 / LMG 1025 / NCDC KC755 / 5377), this protein is 3-deoxy-manno-octulosonate cytidylyltransferase.